We begin with the raw amino-acid sequence, 94 residues long: Small ribosomal subunit protein bS18c (94 aa).

This sequence belongs to the bacterial ribosomal protein bS18 family. As to quaternary structure, part of the 30S ribosomal subunit.

The protein localises to the plastid. Its subcellular location is the chloroplast. The protein is Small ribosomal subunit protein bS18c of Manihot esculenta (Cassava).